The following is an 842-amino-acid chain: Alanine--tRNA ligase (842 aa).

Zn(2+) is bound by residues histidine 549, histidine 553, cysteine 650, and histidine 654.

Belongs to the class-II aminoacyl-tRNA synthetase family. The cofactor is Zn(2+).

The protein localises to the cytoplasm. The catalysed reaction is tRNA(Ala) + L-alanine + ATP = L-alanyl-tRNA(Ala) + AMP + diphosphate. Functionally, catalyzes the attachment of alanine to tRNA(Ala) in a two-step reaction: alanine is first activated by ATP to form Ala-AMP and then transferred to the acceptor end of tRNA(Ala). Also edits incorrectly charged Ser-tRNA(Ala) and Gly-tRNA(Ala) via its editing domain. This Campylobacter jejuni subsp. jejuni serotype O:2 (strain ATCC 700819 / NCTC 11168) protein is Alanine--tRNA ligase.